The following is a 778-amino-acid chain: Molybdenum cofactor sulfurase (778 aa).

Lys235 bears the N6-(pyridoxal phosphate)lysine mark. The active site involves Cys399. 2 disordered regions span residues 576–596 (LSKN…SRVC) and 654–673 (ARPA…DTEK). Residues 584-594 (RSSSSRSRSSR) are compositionally biased toward low complexity. One can recognise an MOSC domain in the interval 651–778 (LPTARPALPG…ETAERARSRL (128 aa)).

Belongs to the class-V pyridoxal-phosphate-dependent aminotransferase family. MOCOS subfamily. Pyridoxal 5'-phosphate serves as cofactor.

The enzyme catalyses Mo-molybdopterin + L-cysteine + AH2 = thio-Mo-molybdopterin + L-alanine + A + H2O. It functions in the pathway cofactor biosynthesis; molybdopterin biosynthesis. In terms of biological role, sulfurates the molybdenum cofactor. Sulfation of molybdenum is essential for xanthine dehydrogenase (XDH) and aldehyde oxidase (ADO) enzymes in which molybdenum cofactor is liganded by 1 oxygen and 1 sulfur atom in active form. This chain is Molybdenum cofactor sulfurase, found in Chaetomium globosum (strain ATCC 6205 / CBS 148.51 / DSM 1962 / NBRC 6347 / NRRL 1970) (Soil fungus).